An 885-amino-acid chain; its full sequence is Translation initiation factor IF-2 (885 aa).

2 disordered regions span residues 55 to 150 (IPDK…ADVT) and 269 to 300 (NTIN…EAVT). Over residues 65-146 (EPKAKKEPKK…AEAPKPKESL (82 aa)) the composition is skewed to basic and acidic residues. The span at 281 to 290 (RRARKKHKKP) shows a compositional bias: basic residues. Residues 384–553 (PRAPVITIMG…LLQADLLELK (170 aa)) form the tr-type G domain. Residues 393–400 (GHVDHGKT) form a G1 region. GTP is bound at residue 393–400 (GHVDHGKT). Residues 418–422 (GITQH) form a G2 region. Positions 439-442 (DTPG) are G3. GTP is bound by residues 439-443 (DTPGH) and 493-496 (NKMD). Residues 493–496 (NKMD) form a G4 region. The segment at 529–531 (SAK) is G5.

Belongs to the TRAFAC class translation factor GTPase superfamily. Classic translation factor GTPase family. IF-2 subfamily.

Its subcellular location is the cytoplasm. In terms of biological role, one of the essential components for the initiation of protein synthesis. Protects formylmethionyl-tRNA from spontaneous hydrolysis and promotes its binding to the 30S ribosomal subunits. Also involved in the hydrolysis of GTP during the formation of the 70S ribosomal complex. The polypeptide is Translation initiation factor IF-2 (Campylobacter concisus (strain 13826)).